The following is a 436-amino-acid chain: Testis-expressed protein 44 (436 aa).

2 stretches are compositionally biased toward acidic residues: residues 1–10 (MTTEPLEDPE) and 45–54 (LPDEVPPEDI). Disordered regions lie at residues 1 to 142 (MTTE…LTSL) and 165 to 307 (AENN…SLYG). Polar residues-rich tracts occupy residues 81-103 (ASMQIATSMGQNKDRASMQTDTS) and 167-195 (NNRTSRSRTVSPSDSQTQEKTSGKSTVSE). Over residues 234–247 (EPTKSADQEAEDFK) the composition is skewed to basic and acidic residues. The segment covering 273–289 (QAPPSPNSPADSPPPSP) has biased composition (pro residues). Ser-375 bears the Phosphoserine mark.

It is found in the cytoplasm. This Rattus norvegicus (Rat) protein is Testis-expressed protein 44 (Tex44).